The primary structure comprises 260 residues: UPF0294 protein plu0699 (260 aa).

It belongs to the UPF0294 family.

It localises to the cytoplasm. The sequence is that of UPF0294 protein plu0699 from Photorhabdus laumondii subsp. laumondii (strain DSM 15139 / CIP 105565 / TT01) (Photorhabdus luminescens subsp. laumondii).